A 2193-amino-acid polypeptide reads, in one-letter code: Protein sidekick-1 (2193 aa).

Residues 1 to 23 (MARARPSVAGGGVAAPPERAGPG) are compositionally biased toward low complexity. Residues 1-56 (MARARPSVAGGGVAAPPERAGPGRPRRSRTGHHCDPECPGLRAAPRTPGPGAGRRA) are disordered. Ig-like C2-type domains are found at residues 86-168 (PYFK…SEIQ), 173-259 (GNFM…SPFI), 275-363 (PIIV…AFLS), 368-458 (PYFT…LDVT), and 462-551 (PAFT…AMLT). Cys108 and Cys151 are disulfide-bonded. N-linked (GlcNAc...) asparagine glycosylation is found at Asn123, Asn253, and Asn283. Intrachain disulfides connect Cys297-Cys344, Cys390-Cys440, and Cys483-Cys535. Residues Asn532, Asn545, and Asn554 are each glycosylated (N-linked (GlcNAc...) asparagine). An Ig-like C2-type 6 domain is found at 556–645 (TSIVHPPEDR…GSDSRTARLE (90 aa)). Cysteines 577 and 629 form a disulfide. 13 Fibronectin type-III domains span residues 652-748 (PPQN…LPEE), 753-849 (PPKN…TLQG), 854-952 (PPQN…THED), 956-1050 (AVGH…VPPD), 1054-1153 (APSN…TLQA), 1158-1256 (APTS…TRES), 1261-1358 (APEN…TKDD), 1362-1456 (PPVR…TEKR), 1461-1558 (PPRE…TLQD), 1563-1681 (PPGS…VGEA), 1686-1782 (APQN…THQA), 1786-1881 (PPSF…AGPA), and 1884-1982 (SPGS…SAQA). N-linked (GlcNAc...) asparagine glycans are attached at residues Asn764, Asn803, Asn864, Asn997, and Asn1006. 2 N-linked (GlcNAc...) asparagine glycosylation sites follow: Asn1264 and Asn1315. N-linked (GlcNAc...) asparagine glycosylation is found at Asn1636, Asn1730, Asn1801, and Asn1875. A helical transmembrane segment spans residues 1992 to 2012 (FLLVMALSSLLLILLVVFVLV). Over 2013–2193 (LHGQSKKYKS…APLTGFSSFV (181 aa)) the chain is Cytoplasmic. The segment at 2057-2080 (STFSKKNGTRSPPRPSPGGLHYSD) is disordered. Positions 2187-2193 (TGFSSFV) match the PDZ-binding motif.

The protein belongs to the sidekick family. In terms of assembly, homodimer; mediates homophilic interactions to promote cell adhesion. Interacts (via PDZ-binding motif) with MAGI1, MAGI2, DLG2, DLG3 and DLG4. Does not mediate homophilic interactions. As to expression, expressed by non-overlapping subsets of retinal neurons. Sdk1 and Sdk2 are expressed in non-overlapping subsets of interneurons and retinal ganglion cells (RGCs) that form synapses in distinct inner plexiform layer (IPL) sublaminae (at protein level).

It localises to the cell membrane. Its subcellular location is the synapse. Adhesion molecule that promotes lamina-specific synaptic connections in the retina. Expressed in specific subsets of interneurons and retinal ganglion cells (RGCs) and promotes synaptic connectivity via homophilic interactions. This is Protein sidekick-1 from Mus musculus (Mouse).